The sequence spans 281 residues: Nucleotide-binding protein Patl_0571 (281 aa).

Residue 8–15 coordinates ATP; the sequence is GRSGSGKS. 56-59 lines the GTP pocket; it reads DVRN.

This sequence belongs to the RapZ-like family.

In terms of biological role, displays ATPase and GTPase activities. This is Nucleotide-binding protein Patl_0571 from Pseudoalteromonas atlantica (strain T6c / ATCC BAA-1087).